The following is a 412-amino-acid chain: Putative potassium channel protein RPA4233 (412 aa).

5 consecutive transmembrane segments (helical) span residues 35 to 55 (FIVF…VPAM), 65 to 85 (ALEL…IWIA), 164 to 184 (LMAC…AMHI), 202 to 222 (WWAI…ATGI), and 225 to 245 (MVAS…VGIV). The Selectivity filter motif lies at 210–215 (TIGYGD). An a nucleoside 3',5'-cyclic phosphate-binding site is contributed by 270-388 (LFSHLTAGDI…RKINQIVEGR (119 aa)).

It belongs to the potassium channel family.

The protein localises to the cell membrane. This is Putative potassium channel protein RPA4233 from Rhodopseudomonas palustris (strain ATCC BAA-98 / CGA009).